A 293-amino-acid chain; its full sequence is Ribosomal protein L11 methyltransferase (293 aa).

S-adenosyl-L-methionine-binding residues include threonine 145, glycine 166, aspartate 188, and asparagine 230.

The protein belongs to the methyltransferase superfamily. PrmA family.

The protein localises to the cytoplasm. It carries out the reaction L-lysyl-[protein] + 3 S-adenosyl-L-methionine = N(6),N(6),N(6)-trimethyl-L-lysyl-[protein] + 3 S-adenosyl-L-homocysteine + 3 H(+). Functionally, methylates ribosomal protein L11. The protein is Ribosomal protein L11 methyltransferase of Shewanella halifaxensis (strain HAW-EB4).